The sequence spans 362 residues: Dihydroorotate dehydrogenase (quinone) (362 aa).

FMN is bound by residues 62–66 (AGYDK) and threonine 86. Substrate is bound at residue lysine 66. 111–115 (NRLGF) serves as a coordination point for substrate. FMN contacts are provided by asparagine 139 and asparagine 170. Asparagine 170 is a binding site for substrate. Serine 173 (nucleophile) is an active-site residue. Asparagine 175 serves as a coordination point for substrate. Lysine 215 and serine 243 together coordinate FMN. Residue 244–245 (NT) participates in substrate binding. FMN contacts are provided by residues glycine 266, glycine 295, and 316-317 (YS).

Belongs to the dihydroorotate dehydrogenase family. Type 2 subfamily. In terms of assembly, monomer. Requires FMN as cofactor.

The protein resides in the cell membrane. The catalysed reaction is (S)-dihydroorotate + a quinone = orotate + a quinol. It functions in the pathway pyrimidine metabolism; UMP biosynthesis via de novo pathway; orotate from (S)-dihydroorotate (quinone route): step 1/1. In terms of biological role, catalyzes the conversion of dihydroorotate to orotate with quinone as electron acceptor. This chain is Dihydroorotate dehydrogenase (quinone), found in Rhizobium johnstonii (strain DSM 114642 / LMG 32736 / 3841) (Rhizobium leguminosarum bv. viciae).